The chain runs to 153 residues: SsrA-binding protein (153 aa).

The segment at Arg-132–Asp-153 is disordered.

This sequence belongs to the SmpB family.

The protein resides in the cytoplasm. In terms of biological role, required for rescue of stalled ribosomes mediated by trans-translation. Binds to transfer-messenger RNA (tmRNA), required for stable association of tmRNA with ribosomes. tmRNA and SmpB together mimic tRNA shape, replacing the anticodon stem-loop with SmpB. tmRNA is encoded by the ssrA gene; the 2 termini fold to resemble tRNA(Ala) and it encodes a 'tag peptide', a short internal open reading frame. During trans-translation Ala-aminoacylated tmRNA acts like a tRNA, entering the A-site of stalled ribosomes, displacing the stalled mRNA. The ribosome then switches to translate the ORF on the tmRNA; the nascent peptide is terminated with the 'tag peptide' encoded by the tmRNA and targeted for degradation. The ribosome is freed to recommence translation, which seems to be the essential function of trans-translation. The sequence is that of SsrA-binding protein from Bordetella avium (strain 197N).